The primary structure comprises 95 residues: Opiscorpine-1 (95 aa).

Positions 1-19 are cleaved as a signal peptide; it reads MNNKLTALIFLGLLAIASC. The BetaSPN-type CS-alpha/beta domain occupies 55–95; it reads EFMCVANVDMTKSCDTHCQKASGEKGYCHGTKCKCGVPLSY. 3 disulfide bridges follow: Cys-58–Cys-82, Cys-68–Cys-87, and Cys-72–Cys-89.

This sequence belongs to the long chain scorpion toxin family. Class 3 subfamily. In terms of tissue distribution, expressed by the venom gland.

It is found in the secreted. In terms of biological role, the short synthetic peptide (20-54) has antimicrobial activity against the yeasts F.culmorum (IC(50)=8.8 uM) and F.oxysporum (IC(50)=10 uM), and the Gram-negative bacteria E.coli. The sequence is that of Opiscorpine-1 from Opistophthalmus carinatus (African yellow leg scorpion).